Reading from the N-terminus, the 784-residue chain is Ribosome biogenesis protein BOP1 homolog (784 aa).

The segment covering methionine 1–glycine 11 has biased composition (basic residues). Residues methionine 1–isoleucine 159 are disordered. Acidic residues-rich tracts occupy residues serine 27 to leucine 36, glutamate 45 to aspartate 54, serine 62 to glycine 73, and alanine 84 to glutamate 111. Residues lysine 112–proline 123 are compositionally biased toward basic and acidic residues. Positions serine 124–alanine 133 are enriched in low complexity. Positions leucine 138 to tyrosine 148 are enriched in basic and acidic residues. Residues glutamine 149 to aspartate 158 are compositionally biased toward acidic residues. 7 WD repeats span residues glycine 445–glutamate 486, aspartate 488–valine 526, threonine 570–proline 612, lysine 615–lysine 653, threonine 656–glutamine 695, leucine 699–glutamine 738, and arginine 754–threonine 784.

Belongs to the WD repeat BOP1/ERB1 family.

The protein resides in the nucleus. It localises to the nucleolus. Its subcellular location is the nucleoplasm. In terms of biological role, required for maturation of ribosomal RNAs and formation of the large ribosomal subunit. In Drosophila yakuba (Fruit fly), this protein is Ribosome biogenesis protein BOP1 homolog.